Reading from the N-terminus, the 232-residue chain is Protein fmp52-1, mitochondrial (232 aa).

The transit peptide at 1–36 directs the protein to the mitochondrion; sequence MASVALIGCTGMVGSHILTSLLAHPSVARVDTISRR.

Belongs to the FMP52 family.

The protein localises to the mitochondrion outer membrane. In Aspergillus terreus (strain NIH 2624 / FGSC A1156), this protein is Protein fmp52-1, mitochondrial (fmp521).